A 333-amino-acid chain; its full sequence is 2-oxoglutarate-dependent dioxygenase ucsF (333 aa).

In terms of domain architecture, Fe2OG dioxygenase spans 174-296; it reads NASELRLNHY…RYSIAYLCKA (123 aa). Positions 202, 204, and 264 each coordinate Fe cation. Arg-287 is a 2-oxoglutarate binding site.

It belongs to the iron/ascorbate-dependent oxidoreductase family. Fe(2+) serves as cofactor.

Its pathway is mycotoxin biosynthesis. Its function is as follows. 2-oxoglutarate-dependent dioxygenase; part of the gene cluster that mediates the biosynthesis of UCS1025A, a member of the pyrrolizidinone family that acts as a strong telomerase inhibitor and displays potent antibacterial and antitumor properties. These compounds share a hemiaminal-containing pyrrolizidinone core fused with a gamma-lactone, giving a furopyrrolizidine that is connected to a decalin fragment. The polyketide synthase module (PKS) of the PKS-NRPS ucsA is responsible for the synthesis of the polyketide backbone via the condensation of an acetyl-CoA starter unit with 6 malonyl-CoA units. The downstream nonribosomal peptide synthetase (NRPS) module then amidates the carboxyl end of the polyketide with a 2S,3S-methylproline derived from L-isoleucine by the 2-oxoglutarate-dependent dioxygenase ucsF which converts L-isoleucine to (4S,5S)-4-methylpyrroline-5-carboxylate that is further converted to 2S,3S-methylproline by the pyrroline-5-carboxylate reductase ucsG. Reductive release of the completed aminoacyl polyketide from the assembly line can form the 3-pyrrolin-2-one structure via an intramolecular Knoevenagel reaction. Because ucsA lacks a designated enoylreductase (ER) domain, the required activity is provided the enoyl reductase ucsL. This keto acyclic precursor is the substrate of the Diels-Alderase ucsH, that catalyzes the Diels-Alder cycloaddition. Oxidation of the 3S-methyl group to a carboxylate by the cytochrome P450 monooxygenase ucsK allows an oxa-Michael cyclization that might involve the reductase/dehydrogenase ucsI and which furnishes the furopyrrolizidine. The oxidase ucsJ likely plays a critical role in stereoselective reduction of the C5-C6 double bond to afford the required R-configured carboxylate group. Further enolization and oxidation at C5 by an unidentified enzyme affords the last intermediate that can undergo oxa-Michael cyclization to yield UCS1025A. The protein is 2-oxoglutarate-dependent dioxygenase ucsF of Acremonium sp.